The chain runs to 574 residues: MVEDGAEELEDLVHFSVSELPSRGYGVMEEIRRQGKLCDVTLKIGDHKFSAHRIVLAASIPYFHAMFTNDMMECKQDEIVMQGMDPSALEALINFAYNGNLAIDQQNVQSLLMGASFLQLQSIKDACCTFLRERLHPKNCLGVRQFAETMMCAVLYDAANSFIHQHFVEVSMSEEFLALPLEDVLELVSRDELNVKSEEQVFEAALAWVRYDREQRGPYLPELLSNIRLPLCRPQFLSDRVQQDDLVRCCHKCRDLVDEAKDYHLMPERRPHLPAFRTRPRCCTSIAGLIYAVGGLNSAGDSLNVVEVFDPIANCWERCRPMTTARSRVGVAVVNGLLYAIGGYDGQLRLSTVEAYNPETDTWTRVGSMNSKRSAMGTVVLDGQIYVCGGYDGNSSLSSVETYSPETDKWTVVTSMSSNRSAAGVTVFEGRIYVSGGHDGLQIFSSVEHYNHHTATWHPAAGMLNKRCRHGAASLGSKMFVCGGYDGSGFLSIAEMYSSVADQWCLIVPMHTRRSRVSLVASCGRLYAVGGYDGQSNLSSVEMYDPETDCWTFMAPMACHEGGVGVGCIPLLTI.

Positions 66–105 (MFTNDMMECKQDEIVMQGMDPSALEALINFAYNGNLAIDQ) constitute a BTB domain. The BACK domain occupies 140 to 242 (CLGVRQFAET…RPQFLSDRVQ (103 aa)). Kelch repeat units lie at residues 289–336 (LIYA…VVNG), 337–383 (LLYA…VLDG), 384–430 (QIYV…VFEG), 432–477 (IYVS…SLGS), 479–524 (MFVC…ASCG), and 525–571 (RLYA…CIPL).

As to quaternary structure, interacts with AURKA. Interacts (via BTB domain) with CUL3. Interacts (via kelch repeats) with UNC119.

Its pathway is protein modification; protein ubiquitination. Its function is as follows. Substrate-specific adapter of a BCR (BTB-CUL3-RBX1) E3 ubiquitin-protein ligase complex required for mitotic progression and cytokinesis. The BCR(KLHL18) E3 ubiquitin ligase complex mediates the ubiquitination of AURKA leading to its activation at the centrosome which is required for initiating mitotic entry. Regulates light-and dark-dependent alpha-transducin localization changes in rod photoreceptors through UNC119 ubiquitination and degradation. Preferentially ubiquitinates the unphosphorylated form of UNC119 over the phosphorylated form. In the presence of UNC119, under dark-adapted conditions alpha-transducin mislocalizes from the outer segment to the inner part of rod photoreceptors which leads to decreased photoreceptor damage caused by light. The protein is Kelch-like protein 18 (KLHL18) of Homo sapiens (Human).